We begin with the raw amino-acid sequence, 402 residues long: APO protein 3, mitochondrial (402 aa).

The transit peptide at 1–13 (MQRRKLVEISIFV) directs the protein to the mitochondrion. The tract at residues 37-59 (NDEDPLYADVPKPPKDKSERKPY) is disordered. Residues 48-58 (KPPKDKSERKP) show a composition bias toward basic and acidic residues. 2 consecutive APO domains span residues 127 to 213 (RCRL…DLEK) and 294 to 380 (TCGY…PVPD).

This sequence belongs to the APO family.

The protein resides in the mitochondrion. In terms of biological role, may be involved in the stable assembly of several 4Fe-4S cluster-containing complexes of mitochondria. The sequence is that of APO protein 3, mitochondrial (APO3) from Arabidopsis thaliana (Mouse-ear cress).